The chain runs to 337 residues: DNA-directed RNA polymerase subunit alpha (337 aa).

The segment at 1 to 233 (MVREKVTVST…DLFIPFLHME (233 aa)) is alpha N-terminal domain (alpha-NTD). The segment at 265–337 (KKIALKSIFI…FVIDLAKNKF (73 aa)) is alpha C-terminal domain (alpha-CTD).

This sequence belongs to the RNA polymerase alpha chain family. In terms of assembly, in plastids the minimal PEP RNA polymerase catalytic core is composed of four subunits: alpha, beta, beta', and beta''. When a (nuclear-encoded) sigma factor is associated with the core the holoenzyme is formed, which can initiate transcription.

The protein localises to the plastid. It is found in the chloroplast. The enzyme catalyses RNA(n) + a ribonucleoside 5'-triphosphate = RNA(n+1) + diphosphate. Functionally, DNA-dependent RNA polymerase catalyzes the transcription of DNA into RNA using the four ribonucleoside triphosphates as substrates. The polypeptide is DNA-directed RNA polymerase subunit alpha (Nicotiana sylvestris (Wood tobacco)).